The primary structure comprises 432 residues: D-amino acid dehydrogenase (432 aa).

3–17 (VLVLGSGVIGTASAY) is an FAD binding site.

This sequence belongs to the DadA oxidoreductase family. Requires FAD as cofactor.

The catalysed reaction is a D-alpha-amino acid + A + H2O = a 2-oxocarboxylate + AH2 + NH4(+). It functions in the pathway amino-acid degradation; D-alanine degradation; NH(3) and pyruvate from D-alanine: step 1/1. Functionally, oxidative deamination of D-amino acids. This is D-amino acid dehydrogenase from Ectopseudomonas mendocina (strain ymp) (Pseudomonas mendocina).